Here is a 159-residue protein sequence, read N- to C-terminus: NADH-quinone oxidoreductase subunit B (159 aa).

The [4Fe-4S] cluster site is built by C37, C38, C102, and C132.

This sequence belongs to the complex I 20 kDa subunit family. In terms of assembly, NDH-1 is composed of 14 different subunits. Subunits NuoB, C, D, E, F, and G constitute the peripheral sector of the complex. [4Fe-4S] cluster serves as cofactor.

The protein localises to the cell inner membrane. The catalysed reaction is a quinone + NADH + 5 H(+)(in) = a quinol + NAD(+) + 4 H(+)(out). Its function is as follows. NDH-1 shuttles electrons from NADH, via FMN and iron-sulfur (Fe-S) centers, to quinones in the respiratory chain. Couples the redox reaction to proton translocation (for every two electrons transferred, four hydrogen ions are translocated across the cytoplasmic membrane), and thus conserves the redox energy in a proton gradient. This Ruthia magnifica subsp. Calyptogena magnifica protein is NADH-quinone oxidoreductase subunit B.